The primary structure comprises 194 residues: Outer-membrane lipoprotein LolB (194 aa).

Residues 1–18 form the signal peptide; it reads MTLFLRIFTFGCLLLLAG. C19 carries the N-palmitoyl cysteine lipid modification. C19 is lipidated: S-diacylglycerol cysteine.

This sequence belongs to the LolB family. Monomer.

Its subcellular location is the cell outer membrane. Plays a critical role in the incorporation of lipoproteins in the outer membrane after they are released by the LolA protein. In Aeromonas salmonicida (strain A449), this protein is Outer-membrane lipoprotein LolB.